The sequence spans 165 residues: Large ribosomal subunit protein uL11 (165 aa).

Position 38 is a phosphoserine (Ser-38). Lys-40 is covalently cross-linked (Glycyl lysine isopeptide (Lys-Gly) (interchain with G-Cter in SUMO2)). A Glycyl lysine isopeptide (Lys-Gly) (interchain with G-Cter in ubiquitin) cross-link involves residue Lys-48. At Lys-54 the chain carries N6-acetyllysine. Residue Lys-83 forms a Glycyl lysine isopeptide (Lys-Gly) (interchain with G-Cter in ubiquitin) linkage. Ser-165 is modified (phosphoserine).

This sequence belongs to the universal ribosomal protein uL11 family. As to quaternary structure, component of the large ribosomal subunit. Mature ribosomes consist of a small (40S) and a large (60S) subunit. The 40S subunit contains about 33 different proteins and 1 molecule of RNA (18S). The 60S subunit contains about 49 different proteins and 3 molecules of RNA (28S, 5.8S and 5S). Ubiquitinated at Lys-48 and Lys-83 by RNF14 and RNF25 in response to ribosome collisions (ribosome stalling).

It localises to the cytoplasm. Functionally, component of the large ribosomal subunit. The ribosome is a large ribonucleoprotein complex responsible for the synthesis of proteins in the cell. Binds directly to 26S ribosomal RNA. In Chinchilla lanigera (Long-tailed chinchilla), this protein is Large ribosomal subunit protein uL11 (RPL12).